The chain runs to 453 residues: tRNA modification GTPase MnmE (453 aa).

Residues Arg22, Glu79, and Lys119 each contribute to the (6S)-5-formyl-5,6,7,8-tetrahydrofolate site. One can recognise a TrmE-type G domain in the interval 215 to 376; the sequence is GMKVVIAGRP…LREHLKACMG (162 aa). Asn225 serves as a coordination point for K(+). GTP-binding positions include 225-230, 244-250, 269-272, and 334-337; these read NAGKSS, TEIAGTT, DTAG, and NKAD. A Mg(2+)-binding site is contributed by Ser229. Residues Thr244, Ile246, and Thr249 each contribute to the K(+) site. Residue Thr250 coordinates Mg(2+). Lys453 is a binding site for (6S)-5-formyl-5,6,7,8-tetrahydrofolate.

It belongs to the TRAFAC class TrmE-Era-EngA-EngB-Septin-like GTPase superfamily. TrmE GTPase family. As to quaternary structure, homodimer. Heterotetramer of two MnmE and two MnmG subunits. It depends on K(+) as a cofactor.

The protein resides in the cytoplasm. Functionally, exhibits a very high intrinsic GTPase hydrolysis rate. Involved in the addition of a carboxymethylaminomethyl (cmnm) group at the wobble position (U34) of certain tRNAs, forming tRNA-cmnm(5)s(2)U34. This is tRNA modification GTPase MnmE from Aeromonas hydrophila subsp. hydrophila (strain ATCC 7966 / DSM 30187 / BCRC 13018 / CCUG 14551 / JCM 1027 / KCTC 2358 / NCIMB 9240 / NCTC 8049).